Reading from the N-terminus, the 383-residue chain is 2-aminoethylphosphonate--pyruvate transaminase (383 aa).

The residue at position 192 (lysine 192) is an N6-(pyridoxal phosphate)lysine.

It belongs to the class-V pyridoxal-phosphate-dependent aminotransferase family. PhnW subfamily. As to quaternary structure, homodimer. Requires pyridoxal 5'-phosphate as cofactor.

It carries out the reaction (2-aminoethyl)phosphonate + pyruvate = phosphonoacetaldehyde + L-alanine. Functionally, involved in phosphonate degradation. The protein is 2-aminoethylphosphonate--pyruvate transaminase of Rhizobium meliloti (strain 1021) (Ensifer meliloti).